We begin with the raw amino-acid sequence, 442 residues long: tRNA pseudouridine(38/39) synthase (442 aa).

Catalysis depends on Asp151, which acts as the Nucleophile. Tyr222 contributes to the substrate binding site.

This sequence belongs to the tRNA pseudouridine synthase TruA family.

The protein resides in the nucleus. It catalyses the reaction uridine(38/39) in tRNA = pseudouridine(38/39) in tRNA. Formation of pseudouridines at positions 38 and 39 in the anticodon stem and loop of transfer RNAs. The polypeptide is tRNA pseudouridine(38/39) synthase (DEG1) (Saccharomyces cerevisiae (strain ATCC 204508 / S288c) (Baker's yeast)).